Here is a 436-residue protein sequence, read N- to C-terminus: MQVSVENTSALERRMTIGVPAERIETEVNKRLQQTARKAKIPGFRPGKVPMSVIRQRYEDGARQEALGDLIQATFYEAVVEQKLNPAGAPAVEPKSFEKGKDLEYVATFEVFPEFTVAGFDSISVERLSADVADSDLDNMLEVLRKQNVRFEVTDRAAQNEDQLNIDFVGKVDGEVFAGGSATGTQLVLGSGRMIPGFEDGLVGAKAGEERVLNVTFPEDYQNLELAGKAAEFTVTVNTVSEPKLPELNEEFFKQFGIKETGIEGFRTEVRKNMERELRQAIKSKVKNQVMDGLLAANPIEVPKALLENEVNRLRVQAVQQFGGNIKPDQLPAELFEEQAKRRVELGLIVAEVVKQFDLKPDDARVREMIQEMASAYQEPEQVVAWYYKNEQQMNEVRSVVLEEQVVDTVLQKASVTDKSVSYEEAVKPVEAPKAD.

The region spanning 161-246 (EDQLNIDFVG…VNTVSEPKLP (86 aa)) is the PPIase FKBP-type domain.

This sequence belongs to the FKBP-type PPIase family. Tig subfamily.

The protein resides in the cytoplasm. The enzyme catalyses [protein]-peptidylproline (omega=180) = [protein]-peptidylproline (omega=0). In terms of biological role, involved in protein export. Acts as a chaperone by maintaining the newly synthesized protein in an open conformation. Functions as a peptidyl-prolyl cis-trans isomerase. The chain is Trigger factor from Pseudomonas syringae pv. syringae (strain B728a).